Consider the following 72-residue polypeptide: MKMMIPVIFSILLLIFSLSSTAMSLEDEQENMEERAEIDFSGIPEDIIKQIKETNAKPPARFDPAAFEKSDD.

The first 24 residues, 1 to 24 (MKMMIPVIFSILLLIFSLSSTAMS), serve as a signal peptide directing secretion. A propeptide spanning residues 25–35 (LEDEQENMEER) is cleaved from the precursor. A Phosphoserine modification is found at S41. The segment at 53–72 (ETNAKPPARFDPAAFEKSDD) is disordered. The propeptide occupies 61–72 (RFDPAAFEKSDD).

Belongs to the non-disulfide-bridged peptide (NDBP) superfamily. Undergoes enzymatic cleavages by carboxypeptidases, endopeptidases, and aminopeptidases resulting in at least 46 fragments of this protein. Expressed by the venom gland.

The protein resides in the secreted. In terms of biological role, agonist of the B2 bradykinin receptor (BDKRB2). Potentiates the hypotensive effect of bradykinin (BK) and induces a direct vasorelaxing effect independent of BK, by endothelium- and nitric oxide (NO)-dependent mechanisms in rat aortic ring preparations. Also exerts proangiogenic, antiinflammatory, and antifibrogenic activities. Does not inhibit the angiotensin-converting enzyme (ACE) but increases its activity, and inhibits neprilysin (NEP) in a non-competitive manner. Exerts intermediate cytotoxicity and pro-inflammatory effects on mouse macrophages, and increases the phagocytic activity of these murine cells. Functionally, presents moderate hemolytic activity at physiological concentrations (micromolar range). Does not induce mast cell degranulation, lactate dehydrogenase (LDH) release from mast cells and antimicrobial effects. In vivo, causes intense pain (but no edema formation), when injected in mice hind paws. Also induces discomfort and anxiety in mice, as it moderately diminishes locomotion and moderately increases rearing behavior. This Tityus serrulatus (Brazilian scorpion) protein is Hypotensin-1.